Consider the following 58-residue polypeptide: Large ribosomal subunit protein bL32c (58 aa).

Positions 1 to 23 (MAVPKKRTSKAKKNARKSVWKKK) are disordered.

This sequence belongs to the bacterial ribosomal protein bL32 family.

It is found in the plastid. Its subcellular location is the chloroplast. This chain is Large ribosomal subunit protein bL32c (rpl32-A), found in Trieres chinensis (Marine centric diatom).